The sequence spans 191 residues: MNYKDQLLKQMVDGKYDRKKYLNMYQRKYNLNSPKISTKPVTIDRARFLVKNKQENQTESSDLNNTDSLVDSNSDNQTNTTDTSTNNVENLNENVTEESTNDTNKDTNIETNNQTKILSPTKSFSPNKKVMDNVLKNQDKISDTERIRFLEEKVSKLERKIRTLSLQMTKISGRSNRFTDKSIKVGPKVYH.

Positions 52 to 112 (NKQENQTESS…TNKDTNIETN (61 aa)) are disordered. Over residues 57-70 (QTESSDLNNTDSLV) the composition is skewed to polar residues. A compositionally biased stretch (low complexity) spans 71–94 (DSNSDNQTNTTDTSTNNVENLNEN). Residues 138-172 (QDKISDTERIRFLEEKVSKLERKIRTLSLQMTKIS) are a coiled coil.

This is an uncharacterized protein from Acanthamoeba polyphaga mimivirus (APMV).